An 85-amino-acid polypeptide reads, in one-letter code: Large ribosomal subunit protein bL27 (85 aa).

Positions 1–20 (MAHKKAAGSTRNGRDSEAKR) are disordered.

It belongs to the bacterial ribosomal protein bL27 family.

The sequence is that of Large ribosomal subunit protein bL27 from Colwellia psychrerythraea (strain 34H / ATCC BAA-681) (Vibrio psychroerythus).